The primary structure comprises 261 residues: tRNA 5-carboxymethoxyuridine methyltransferase (261 aa).

Residues Arg-26, 52-53 (GG), Asp-73, 102-103 (AQ), and His-119 each bind S-adenosyl-L-methionine.

The protein belongs to the class I-like SAM-binding methyltransferase superfamily. CmoM family. As to quaternary structure, homodimer.

The catalysed reaction is 5-carboxymethoxyuridine(34) in tRNA + S-adenosyl-L-methionine = 5-methoxycarbonylmethoxyuridine(34) in tRNA + S-adenosyl-L-homocysteine. In terms of biological role, catalyzes the methylation of 5-carboxymethoxyuridine (cmo5U) to form 5-methoxycarbonylmethoxyuridine (mcmo5U) at position 34 in tRNAs. This Escherichia coli O157:H7 protein is tRNA 5-carboxymethoxyuridine methyltransferase.